The chain runs to 522 residues: 2-isopropylmalate synthase (522 aa).

A Pyruvate carboxyltransferase domain is found at 5-267 (VIIFDTTLRD…YTNINAREIH (263 aa)). The Mn(2+) site is built by Asp14, His202, His204, and Asn238. The interval 392 to 522 (VMEQLVVQSD…MQQTRELGGV (131 aa)) is regulatory domain.

It belongs to the alpha-IPM synthase/homocitrate synthase family. LeuA type 1 subfamily. In terms of assembly, homodimer. Requires Mn(2+) as cofactor.

Its subcellular location is the cytoplasm. The enzyme catalyses 3-methyl-2-oxobutanoate + acetyl-CoA + H2O = (2S)-2-isopropylmalate + CoA + H(+). It functions in the pathway amino-acid biosynthesis; L-leucine biosynthesis; L-leucine from 3-methyl-2-oxobutanoate: step 1/4. Functionally, catalyzes the condensation of the acetyl group of acetyl-CoA with 3-methyl-2-oxobutanoate (2-ketoisovalerate) to form 3-carboxy-3-hydroxy-4-methylpentanoate (2-isopropylmalate). In Shewanella amazonensis (strain ATCC BAA-1098 / SB2B), this protein is 2-isopropylmalate synthase.